A 256-amino-acid chain; its full sequence is Thiazole synthase (256 aa).

The active-site Schiff-base intermediate with DXP is Lys96. 1-deoxy-D-xylulose 5-phosphate-binding positions include Gly157, 184–185 (AG), and 206–207 (NT).

Belongs to the ThiG family. Homotetramer. Forms heterodimers with either ThiH or ThiS.

Its subcellular location is the cytoplasm. It carries out the reaction [ThiS sulfur-carrier protein]-C-terminal-Gly-aminoethanethioate + 2-iminoacetate + 1-deoxy-D-xylulose 5-phosphate = [ThiS sulfur-carrier protein]-C-terminal Gly-Gly + 2-[(2R,5Z)-2-carboxy-4-methylthiazol-5(2H)-ylidene]ethyl phosphate + 2 H2O + H(+). The protein operates within cofactor biosynthesis; thiamine diphosphate biosynthesis. Catalyzes the rearrangement of 1-deoxy-D-xylulose 5-phosphate (DXP) to produce the thiazole phosphate moiety of thiamine. Sulfur is provided by the thiocarboxylate moiety of the carrier protein ThiS. In vitro, sulfur can be provided by H(2)S. The protein is Thiazole synthase of Brucella melitensis biotype 2 (strain ATCC 23457).